Here is a 302-residue protein sequence, read N- to C-terminus: 4-hydroxy-tetrahydrodipicolinate synthase (302 aa).

A pyruvate-binding site is contributed by T46. Catalysis depends on Y134, which acts as the Proton donor/acceptor. The active-site Schiff-base intermediate with substrate is the K162. V204 contributes to the pyruvate binding site.

This sequence belongs to the DapA family. In terms of assembly, homotetramer; dimer of dimers.

It localises to the cytoplasm. The enzyme catalyses L-aspartate 4-semialdehyde + pyruvate = (2S,4S)-4-hydroxy-2,3,4,5-tetrahydrodipicolinate + H2O + H(+). The protein operates within amino-acid biosynthesis; L-lysine biosynthesis via DAP pathway; (S)-tetrahydrodipicolinate from L-aspartate: step 3/4. Its function is as follows. Catalyzes the condensation of (S)-aspartate-beta-semialdehyde [(S)-ASA] and pyruvate to 4-hydroxy-tetrahydrodipicolinate (HTPA). This is 4-hydroxy-tetrahydrodipicolinate synthase from Xylella fastidiosa (strain Temecula1 / ATCC 700964).